Consider the following 394-residue polypeptide: Acid ceramidase (394 aa).

The signal sequence occupies residues 1-20 (MLGRSLLTWVLAAAVTCAQA). Cys30 and Cys339 form a disulfide bridge. Cys142 functions as the Nucleophile in the catalytic mechanism. Asn194, Asn258, Asn285, and Asn341 each carry an N-linked (GlcNAc...) asparagine glycan. Cys387 and Cys391 are disulfide-bonded.

Belongs to the acid ceramidase family. Heterodimer; disulfide-linked. The heterodimer is composed of the disulfide-linked alpha and beta chains produced by autocatalytic cleavage of the precursor. In terms of processing, N-glycosylated. Post-translationally, proteolytically cleaved into two chains alpha and beta that remain associated via a disulfide bond. Cleavage gives rise to a conformation change that activates the enzyme. The same catalytic Cys residue mediates the autoproteolytic cleavage and subsequent hydrolysis of lipid substrates. The beta chain may undergo an additional C-terminal processing.

It is found in the lysosome. It localises to the secreted. The catalysed reaction is an N-acylsphing-4-enine + H2O = sphing-4-enine + a fatty acid. It catalyses the reaction N-dodecanoylsphing-4-enine + H2O = dodecanoate + sphing-4-enine. The enzyme catalyses N-tetradecanoylsphing-4-enine + H2O = tetradecanoate + sphing-4-enine. It carries out the reaction N-hexadecanoylsphing-4-enine + H2O = sphing-4-enine + hexadecanoate. The catalysed reaction is N-octadecanoylsphing-4-enine + H2O = sphing-4-enine + octadecanoate. It catalyses the reaction N-dodecanoyl-(4R)-hydroxysphinganine + H2O = (4R)-hydroxysphinganine + dodecanoate. The enzyme catalyses N-(dodecanoyl)-sphinganine + H2O = dodecanoate + sphinganine. It carries out the reaction N-(acetyl)-sphing-4-enine + H2O = sphing-4-enine + acetate. The catalysed reaction is N-(hexanoyl)sphing-4-enine + H2O = hexanoate + sphing-4-enine. It catalyses the reaction N-octanoylsphing-4-enine + H2O = octanoate + sphing-4-enine. The enzyme catalyses N-(9Z-octadecenoyl)-sphing-4-enine + H2O = sphing-4-enine + (9Z)-octadecenoate. It carries out the reaction N-dodecanoylethanolamine + H2O = dodecanoate + ethanolamine. The protein operates within lipid metabolism; sphingolipid metabolism. In terms of biological role, lysosomal ceramidase that hydrolyzes sphingolipid ceramides into sphingosine and free fatty acids at acidic pH. Ceramides, sphingosine, and its phosphorylated form sphingosine-1-phosphate are bioactive lipids that mediate cellular signaling pathways regulating several biological processes including cell proliferation, apoptosis and differentiation. Has a higher catalytic efficiency towards C12-ceramides versus other ceramides. Also catalyzes the reverse reaction allowing the synthesis of ceramides from fatty acids and sphingosine. For the reverse synthetic reaction, the natural sphingosine D-erythro isomer is more efficiently utilized as a substrate compared to D-erythro-dihydrosphingosine and D-erythro-phytosphingosine, while the fatty acids with chain lengths of 12 or 14 carbons are the most efficiently used. Also has an N-acylethanolamine hydrolase activity. By regulating the levels of ceramides, sphingosine and sphingosine-1-phosphate in the epidermis, mediates the calcium-induced differentiation of epidermal keratinocytes. Also indirectly regulates tumor necrosis factor/TNF-induced apoptosis. By regulating the intracellular balance between ceramides and sphingosine, in adrenocortical cells, probably also acts as a regulator of steroidogenesis. The sequence is that of Acid ceramidase from Rattus norvegicus (Rat).